Reading from the N-terminus, the 357-residue chain is DNA replication and repair protein RecF (357 aa).

30–37 serves as a coordination point for ATP; sequence GANGSGKT.

The protein belongs to the RecF family.

It localises to the cytoplasm. The RecF protein is involved in DNA metabolism; it is required for DNA replication and normal SOS inducibility. RecF binds preferentially to single-stranded, linear DNA. It also seems to bind ATP. The sequence is that of DNA replication and repair protein RecF from Klebsiella pneumoniae subsp. pneumoniae (strain ATCC 700721 / MGH 78578).